Reading from the N-terminus, the 1131-residue chain is Major DNA-binding protein (1131 aa).

Positions 790 to 791 match the Required for filament formation motif; it reads FW. The tract at residues 1112–1131 is required for nuclear localization; that stretch reads LKCEETEHENEEPSLKKARL.

It belongs to the herpesviridae major DNA-binding protein family. Homooligomers. Forms double-helical filaments necessary for the formation of replication compartments within the host nucleus. Interacts with the origin-binding protein. Interacts with the helicase primase complex; this interaction stimulates primer synthesis activity of the helicase-primase complex. Interacts with the DNA polymerase. Interacts with the alkaline exonuclease; this interaction increases its nuclease processivity.

The protein localises to the host nucleus. In terms of biological role, single-stranded DNA-binding protein required for DNA replication. Plays several crucial roles in viral infection. Participates in the opening of the viral DNA origin to initiate replication by interacting with the origin-binding protein. May disrupt loops, hairpins and other secondary structures present on ssDNA to reduce and eliminate pausing of viral DNA polymerase at specific sites during elongation. Promotes viral DNA recombination by performing strand-transfer, characterized by the ability to transfer a DNA strand from a linear duplex to a complementary single-stranded DNA circle. Can also catalyze the renaturation of complementary single strands. Additionally, reorganizes the host cell nucleus, leading to the formation of prereplicative sites and replication compartments. This process is driven by the protein which can form double-helical filaments in the absence of DNA. This is Major DNA-binding protein from Human herpesvirus 7 (strain JI) (HHV-7).